Here is a 283-residue protein sequence, read N- to C-terminus: NAD kinase (283 aa).

Residue Asp-68 is the Proton acceptor of the active site. NAD(+) contacts are provided by residues Asp-68 to Gly-69, Arg-73, Asn-142 to Asp-143, Arg-153, Arg-170, Asp-172, and Thr-183 to Ser-188.

The protein belongs to the NAD kinase family. A divalent metal cation is required as a cofactor.

It localises to the cytoplasm. It carries out the reaction NAD(+) + ATP = ADP + NADP(+) + H(+). In terms of biological role, involved in the regulation of the intracellular balance of NAD and NADP, and is a key enzyme in the biosynthesis of NADP. Catalyzes specifically the phosphorylation on 2'-hydroxyl of the adenosine moiety of NAD to yield NADP. The sequence is that of NAD kinase from Symbiobacterium thermophilum (strain DSM 24528 / JCM 14929 / IAM 14863 / T).